The chain runs to 138 residues: Small ribosomal subunit protein uS11 (138 aa).

Residues 1 to 12 are compositionally biased toward low complexity; that stretch reads MPPKKANAAGPK. The interval 1–23 is disordered; that stretch reads MPPKKANAAGPKKGQKTRKREKK. Basic residues predominate over residues 13 to 22; it reads KGQKTRKREK.

The protein belongs to the universal ribosomal protein uS11 family. In terms of assembly, part of the 30S ribosomal subunit. Interacts with proteins S7 and S18. Binds to IF-3.

Its function is as follows. Located on the platform of the 30S subunit, it bridges several disparate RNA helices of the 16S rRNA. Forms part of the Shine-Dalgarno cleft in the 70S ribosome. This is Small ribosomal subunit protein uS11 from Mycobacterium leprae (strain Br4923).